A 337-amino-acid chain; its full sequence is Glyceraldehyde-3-phosphate dehydrogenase 3, cytosolic (337 aa).

A binding to NAD region spans residues 1–151; that stretch reads MAKIKIGING…YKSDINIVSN (151 aa). Residues 13–14, aspartate 35, and arginine 82 each bind NAD(+); that span reads RI. Positions 152 to 337 are catalytic; the sequence is ASCTTNCLAP…DLIRHMNSTK (186 aa). D-glyceraldehyde 3-phosphate-binding positions include 153–155, threonine 184, 213–214, and arginine 236; these read SCT and TG. Cysteine 154 (nucleophile) is an active-site residue. Position 318 (asparagine 318) interacts with NAD(+).

Belongs to the glyceraldehyde-3-phosphate dehydrogenase family. As to quaternary structure, homotetramer.

It is found in the cytoplasm. The enzyme catalyses D-glyceraldehyde 3-phosphate + phosphate + NAD(+) = (2R)-3-phospho-glyceroyl phosphate + NADH + H(+). The protein operates within carbohydrate degradation; glycolysis; pyruvate from D-glyceraldehyde 3-phosphate: step 1/5. Its function is as follows. Key enzyme in glycolysis that catalyzes the first step of the pathway by converting D-glyceraldehyde 3-phosphate (G3P) into 3-phospho-D-glyceroyl phosphate. Essential for the maintenance of cellular ATP levels and carbohydrate metabolism. This is Glyceraldehyde-3-phosphate dehydrogenase 3, cytosolic (GAPC3) from Zea mays (Maize).